We begin with the raw amino-acid sequence, 279 residues long: Cell division protein FtsQ (279 aa).

The interval 1–28 is disordered; sequence MTPMKKQLDKSLGSRRGATATRAKERAD. The Cytoplasmic segment spans residues 1-48; it reads MTPMKKQLDKSLGSRRGATATRAKERADNRNTGPAAIVRLLAFIPWNR. A helical membrane pass occupies residues 49 to 69; it reads VLLHVSIFCFWLLVLSALIAG. The Periplasmic portion of the chain corresponds to 70-279; the sequence is VKWLDRPVAT…WKADVTPEQG (210 aa). In terms of domain architecture, POTRA spans 75 to 144; it reads RPVATVQVVG…DAVQVDLEEE (70 aa).

This sequence belongs to the FtsQ/DivIB family. FtsQ subfamily. Part of a complex composed of FtsB, FtsL and FtsQ.

The protein localises to the cell inner membrane. Essential cell division protein. May link together the upstream cell division proteins, which are predominantly cytoplasmic, with the downstream cell division proteins, which are predominantly periplasmic. May control correct divisome assembly. This Hahella chejuensis (strain KCTC 2396) protein is Cell division protein FtsQ.